The sequence spans 147 residues: Hemoglobin subunit beta (147 aa).

Residues 2–147 (HWEDAEKQYI…ISHSLGREYH (146 aa)) form the Globin domain. Positions 63 and 92 each coordinate heme b.

Belongs to the globin family. Heterotetramer of two alpha chains and two beta chains. As to expression, red blood cells.

Functionally, involved in oxygen transport from the lung to the various peripheral tissues. The protein is Hemoglobin subunit beta (HBB) of Lepidosiren paradoxus (South American lungfish).